The primary structure comprises 615 residues: uncharacterized protein (615 aa).

Belongs to the NodU/CmcH family.

This is an uncharacterized protein from Synechocystis sp. (strain ATCC 27184 / PCC 6803 / Kazusa).